The chain runs to 759 residues: Protein MTSS 1 (759 aa).

An IMD domain is found at 1–254 (MEAVIEKECS…EQVILDLKGS (254 aa)). Residues 108 to 157 (LQEQMEEWKKVANQLDKDHAKEYKKARQEIKNKSSDTLKLQKKAKKVDAQ) are a coiled coil. The segment at 259–309 (SYQTPPSSPSTTMSRKSSVCSSLNSVNSSDSRSSGSHSHSPSSHYRYRSSN) is disordered. A Phosphothreonine modification is found at Thr262. 4 positions are modified to phosphoserine: Ser265, Ser266, Ser275, and Ser326. Residues 331 to 354 (QDAFQSKSPSPMPPEAANQLSNGF) form a disordered region. Thr429 is subject to Phosphothreonine. Disordered stretches follow at residues 431 to 472 (QRRK…AATR) and 569 to 759 (KRPA…PRFS). Position 607 is a phosphothreonine (Thr607). A compositionally biased stretch (low complexity) spans 612–627 (PIPIKTPVIPVKTPTV). Phosphoserine occurs at positions 648 and 651. The span at 660 to 670 (GVSNIPSSLWS) shows a compositional bias: polar residues. Residues 675 to 685 (VNPPLPGPKPS) are compositionally biased toward pro residues. Positions 731-748 (QGEDMLNAIRRGVKLKKT) constitute a WH2 domain.

The protein belongs to the MTSS family. Binds to actin. Strongly expressed in the developing neurons and skeletal and cardiac muscles in embryos. Strongly expressed also in liver, outer layers of the kidney, and in the Purkinje cells of the brain.

The protein localises to the cytoplasm. Its subcellular location is the cytoskeleton. Functionally, inhibits the nucleation of actin filaments in vitro. This Mus musculus (Mouse) protein is Protein MTSS 1.